The primary structure comprises 315 residues: Ester hydrolase C11orf54 homolog (315 aa).

Positions 266, 268, and 278 each coordinate Zn(2+).

Monomer.

It localises to the nucleus. Functionally, exhibits ester hydrolase activity on the substrate p-nitrophenyl acetate. This is Ester hydrolase C11orf54 homolog from Bos taurus (Bovine).